The chain runs to 212 residues: tRNA (guanine-N(7)-)-methyltransferase (212 aa).

4 residues coordinate S-adenosyl-L-methionine: Glu-44, Asp-69, Asp-96, and Asp-118. Asp-118 is a catalytic residue. Lys-122 contributes to the substrate binding site. Residues 124–129 (RHEKRR) form an interaction with RNA region. Substrate contacts are provided by residues Asp-154 and 191–194 (TEYE).

The protein belongs to the class I-like SAM-binding methyltransferase superfamily. TrmB family.

The enzyme catalyses guanosine(46) in tRNA + S-adenosyl-L-methionine = N(7)-methylguanosine(46) in tRNA + S-adenosyl-L-homocysteine. Its pathway is tRNA modification; N(7)-methylguanine-tRNA biosynthesis. In terms of biological role, catalyzes the formation of N(7)-methylguanine at position 46 (m7G46) in tRNA. This chain is tRNA (guanine-N(7)-)-methyltransferase, found in Streptococcus gordonii (strain Challis / ATCC 35105 / BCRC 15272 / CH1 / DL1 / V288).